A 197-amino-acid polypeptide reads, in one-letter code: Ribosome maturation factor RimP (197 aa).

This sequence belongs to the RimP family.

The protein localises to the cytoplasm. Required for maturation of 30S ribosomal subunits. This Acidovorax ebreus (strain TPSY) (Diaphorobacter sp. (strain TPSY)) protein is Ribosome maturation factor RimP.